We begin with the raw amino-acid sequence, 300 residues long: Fluorinase (300 aa).

S-adenosyl-L-methionine contacts are provided by residues aspartate 16, 21-23 (DDS), tyrosine 77, serine 158, aspartate 211, asparagine 216, 270-271 (SR), and 278-280 (RNA).

This sequence belongs to the SAM hydrolase / SAM-dependent halogenase family. In terms of assembly, homohexamer.

It catalyses the reaction fluoride + S-adenosyl-L-methionine = 5'-deoxy-5'-fluoroadenosine + L-methionine. The enzyme catalyses chloride + S-adenosyl-L-methionine = 5'-chloro-5'-deoxyadenosine + L-methionine. Activity is severely inhibited by 1 mM Cu(2+) or Zn(2+). Catalyzes the formation of a C-F bond by combining S-adenosyl-L-methionine (SAM) and fluoride to generate 5'-fluoro-5'-deoxyadenosine (5'-FDA) and L-methionine. Probably involved in fluoroacetate (FAc) and 4-fluorothreonine (4-FT) biosynthesis. In vitro, can also catalyze the conversion of chloride and SAM to 5'-chloro-5'-deoxyadenosine (5'-CIDA) and L-methionine in the presence of L-amino acid oxidase. The polypeptide is Fluorinase (Nocardia brasiliensis (strain ATCC 700358 / HUJEG-1)).